The following is a 366-amino-acid chain: Peroxisomal (S)-2-hydroxy-acid oxidase GLO4 (366 aa).

An FMN hydroxy acid dehydrogenase domain is found at 1-360 (MEDNLPVNVR…TRSHVMTEGD (360 aa)). Tyr-27 contacts a 2-oxocarboxylate. Residues 80 to 82 (PTG), Ser-109, 130 to 132 (QLY), and Thr-158 each bind FMN. Tyr-132 serves as a coordination point for a 2-oxocarboxylate. Position 167 (Arg-167) interacts with a 2-oxocarboxylate. 2 residues coordinate FMN: Lys-231 and Ser-253. The active-site Proton acceptor is the His-255. Position 258 (Arg-258) interacts with a 2-oxocarboxylate. FMN contacts are provided by residues 286–290 (DGGIR) and 309–310 (GR). Positions 364-366 (SLL) match the Microbody targeting signal motif.

The protein belongs to the FMN-dependent alpha-hydroxy acid dehydrogenase family. Homotetramer. Binds to CATB and CATC; these interactions are disturbed by alpha-hydroxy-2-pyridinemethanesulfonic acid (HPMS) and salicylic acid (SA). Requires FMN as cofactor.

It is found in the peroxisome. It catalyses the reaction a (2S)-2-hydroxycarboxylate + O2 = a 2-oxocarboxylate + H2O2. It participates in lipid metabolism; fatty acid metabolism. Its function is as follows. Oxidase that catalyzes the oxidation of a broad range of 2-hydroxyacids to the corresponding 2-oxoacids, with a reduction of O2 to H2O2. May be involved in a general medium- and long-chain fatty acid catabolic pathway such as alpha-oxidation. In Oryza sativa subsp. japonica (Rice), this protein is Peroxisomal (S)-2-hydroxy-acid oxidase GLO4 (GLO4).